Here is a 498-residue protein sequence, read N- to C-terminus: ATP synthase subunit alpha, chloroplastic (498 aa).

170–177 is an ATP binding site; sequence GDRQTGKT.

Belongs to the ATPase alpha/beta chains family. As to quaternary structure, F-type ATPases have 2 components, CF(1) - the catalytic core - and CF(0) - the membrane proton channel. CF(1) has five subunits: alpha(3), beta(3), gamma(1), delta(1), epsilon(1). CF(0) has four main subunits: a, b, b' and c.

The protein resides in the plastid. The protein localises to the chloroplast thylakoid membrane. The enzyme catalyses ATP + H2O + 4 H(+)(in) = ADP + phosphate + 5 H(+)(out). In terms of biological role, produces ATP from ADP in the presence of a proton gradient across the membrane. The alpha chain is a regulatory subunit. In Oltmannsiellopsis viridis (Marine flagellate), this protein is ATP synthase subunit alpha, chloroplastic.